The sequence spans 838 residues: Xyloglucanase (838 aa).

Positions 1–19 (MKVSRVLALVLGAVIPAHA) are cleaved as a signal peptide. Catalysis depends on aspartate 53, which acts as the Nucleophile. 2 N-linked (GlcNAc...) asparagine glycosylation sites follow: asparagine 232 and asparagine 436. Catalysis depends on aspartate 469, which acts as the Proton donor. A disordered region spans residues 750 to 801 (GTGGTSSSTKQSSSSTSSASSSTTLRSSVVSTTRASTVTSSRTSSAAGPTGS). The segment covering 754–797 (TSSSTKQSSSSTSSASSSTTLRSSVVSTTRASTVTSSRTSSAAG) has biased composition (low complexity). The region spanning 802–838 (GVAGHYAQCGGIGWTGPTQCVAPYVCQKQNDYYYQCV) is the CBM1 domain.

This sequence belongs to the glycosyl hydrolase 74 family.

The enzyme catalyses Hydrolysis of (1-&gt;4)-D-glucosidic linkages in xyloglucans so as to successively remove oligosaccharides from the newly-formed chain end after endo-initiation on a polymer molecule.. Its function is as follows. Hydrolyzes the glucosidic bonds of unbranched Glc residues in tamarind seed xyloglucan, producing XXXG, XLXG, XXLG and XLLG. Has a low activity against beta-glucan and carboxymethylcellulose. Not active against Avicel, laminarin, xylan, galactomannan, linear and branched arabinans, galactan, polygalacturonic acid, starch, beta-D-Glcp, beta-D-cellobiose, beta-D-Galp, beta-D-Xylp, alpha-D-Xylp, alpha-L-Araf and alpha-L-Arap. In Hypocrea jecorina (strain QM6a) (Trichoderma reesei), this protein is Xyloglucanase.